Reading from the N-terminus, the 345-residue chain is MENGTEGKNFYIPMNNRTGLVRSPYEYPQYYLADPWQFKLLGIYMFFLILTGFPINALTLVVTAQNKKLRQPLNFILVNLAVAGLIMVCFGFTVCIYSCMVGYFSLGPLGCTIEGFMATLGGQVSLWSLVVLAIERYIVVCKPMGSFKFTATHSAAGCAFTWIMASSCAVPPLVGWSRYIPEGIQVSCGPDYYTLAPGFNNESFVMYMFSCHFCVPVFTIFFTYGSLVMTVKAAAAQQQDSASTQKAEKEVTRMCFLMVLGFLLAWVPYASYAAWIFFNRGAAFSAMSMAIPSFFSKSSALFNPIIYILLNKQFRNCMLATIGMGGMVEDETSVSTSKTEVSTAA.

The Extracellular segment spans residues 1–37 (MENGTEGKNFYIPMNNRTGLVRSPYEYPQYYLADPWQ). N3 and N16 each carry an N-linked (GlcNAc...) asparagine glycan. A helical membrane pass occupies residues 38-62 (FKLLGIYMFFLILTGFPINALTLVV). Residues 63–74 (TAQNKKLRQPLN) lie on the Cytoplasmic side of the membrane. The helical transmembrane segment at 75 to 100 (FILVNLAVAGLIMVCFGFTVCIYSCM) threads the bilayer. Residues 101-114 (VGYFSLGPLGCTIE) are Extracellular-facing. C111 and C188 are oxidised to a cystine. A helical transmembrane segment spans residues 115–134 (GFMATLGGQVSLWSLVVLAI). The Cytoplasmic portion of the chain corresponds to 135–153 (ERYIVVCKPMGSFKFTATH). Residues 154–177 (SAAGCAFTWIMASSCAVPPLVGWS) form a helical membrane-spanning segment. Topologically, residues 178 to 203 (RYIPEGIQVSCGPDYYTLAPGFNNES) are extracellular. N201 is a glycosylation site (N-linked (GlcNAc...) asparagine). Residues 204 to 231 (FVMYMFSCHFCVPVFTIFFTYGSLVMTV) traverse the membrane as a helical segment. The Cytoplasmic portion of the chain corresponds to 232–253 (KAAAAQQQDSASTQKAEKEVTR). The chain crosses the membrane as a helical span at residues 254-277 (MCFLMVLGFLLAWVPYASYAAWIF). At 278 to 285 (FNRGAAFS) the chain is on the extracellular side. The chain crosses the membrane as a helical span at residues 286–310 (AMSMAIPSFFSKSSALFNPIIYILL). N6-(retinylidene)lysine is present on K297. Residues 311-345 (NKQFRNCMLATIGMGGMVEDETSVSTSKTEVSTAA) lie on the Cytoplasmic side of the membrane.

It belongs to the G-protein coupled receptor 1 family. Opsin subfamily. Phosphorylated on some or all of the serine and threonine residues present in the C-terminal region. In terms of tissue distribution, the color pigments are found in the cone photoreceptor cells.

The protein localises to the membrane. Functionally, visual pigments are the light-absorbing molecules that mediate vision. They consist of an apoprotein, opsin, covalently linked to cis-retinal. This Oryzias latipes (Japanese rice fish) protein is Green-sensitive opsin.